Reading from the N-terminus, the 148-residue chain is Snaclec 3 (148 aa).

The signal sequence occupies residues Trp-1 to Ala-23. 3 disulfides stabilise this stretch: Cys-27–Cys-38, Cys-55–Cys-144, and Cys-121–Cys-136. Positions Tyr-34–Lys-145 constitute a C-type lectin domain.

This sequence belongs to the snaclec family. As to quaternary structure, heterodimer; disulfide-linked. In terms of tissue distribution, expressed by the venom gland.

The protein localises to the secreted. Functionally, interferes with one step of hemostasis (modulation of platelet aggregation, or coagulation cascade, for example). In Echis carinatus sochureki (Saw-scaled viper), this protein is Snaclec 3.